The chain runs to 116 residues: Ribosome-binding factor A (116 aa).

The protein belongs to the RbfA family. Monomer. Binds 30S ribosomal subunits, but not 50S ribosomal subunits or 70S ribosomes.

The protein localises to the cytoplasm. One of several proteins that assist in the late maturation steps of the functional core of the 30S ribosomal subunit. Associates with free 30S ribosomal subunits (but not with 30S subunits that are part of 70S ribosomes or polysomes). Required for efficient processing of 16S rRNA. May interact with the 5'-terminal helix region of 16S rRNA. The protein is Ribosome-binding factor A of Streptococcus pneumoniae serotype 4 (strain ATCC BAA-334 / TIGR4).